Consider the following 194-residue polypeptide: Imidazoleglycerol-phosphate dehydratase (194 aa).

Belongs to the imidazoleglycerol-phosphate dehydratase family.

It localises to the cytoplasm. It catalyses the reaction D-erythro-1-(imidazol-4-yl)glycerol 3-phosphate = 3-(imidazol-4-yl)-2-oxopropyl phosphate + H2O. Its pathway is amino-acid biosynthesis; L-histidine biosynthesis; L-histidine from 5-phospho-alpha-D-ribose 1-diphosphate: step 6/9. This chain is Imidazoleglycerol-phosphate dehydratase, found in Chlorobaculum parvum (strain DSM 263 / NCIMB 8327) (Chlorobium vibrioforme subsp. thiosulfatophilum).